A 201-amino-acid polypeptide reads, in one-letter code: Proteinase inhibitor type-2 CEVI57 (201 aa).

The first 23 residues, 1-23 (MAVYKVSFLAHLLVLGMYLLVST), serve as a signal peptide directing secretion. 3 consecutive repeat copies span residues 27 to 83 (ANAC…DPKN), 84 to 143 (PNIC…IEPK), and 144 to 199 (GCTK…QSIS). 8 cysteine pairs are disulfide-bonded: Cys-30-Cys-118, Cys-34-Cys-114, Cys-42-Cys-124, Cys-54-Cys-91, Cys-57-Cys-75, Cys-58-Cys-87, Cys-64-Cys-100, and Cys-117-Cys-135.

This sequence belongs to the protease inhibitor I20 (potato type II proteinase inhibitor) family.

In Solanum lycopersicum (Tomato), this protein is Proteinase inhibitor type-2 CEVI57 (CEVI57).